The following is a 408-amino-acid chain: Imidazolonepropionase (408 aa).

The Fe(3+) site is built by His-73 and His-75. 2 residues coordinate Zn(2+): His-73 and His-75. 3 residues coordinate 4-imidazolone-5-propanoate: Arg-82, Tyr-145, and His-178. Tyr-145 lines the N-formimidoyl-L-glutamate pocket. Residue His-243 coordinates Fe(3+). Residue His-243 participates in Zn(2+) binding. Gln-246 contributes to the 4-imidazolone-5-propanoate binding site. Asp-318 contributes to the Fe(3+) binding site. Residue Asp-318 coordinates Zn(2+). 2 residues coordinate N-formimidoyl-L-glutamate: Asn-320 and Gly-322. Ser-323 serves as a coordination point for 4-imidazolone-5-propanoate.

This sequence belongs to the metallo-dependent hydrolases superfamily. HutI family. Requires Zn(2+) as cofactor. The cofactor is Fe(3+).

It localises to the cytoplasm. It catalyses the reaction 4-imidazolone-5-propanoate + H2O = N-formimidoyl-L-glutamate. Its pathway is amino-acid degradation; L-histidine degradation into L-glutamate; N-formimidoyl-L-glutamate from L-histidine: step 3/3. Functionally, catalyzes the hydrolytic cleavage of the carbon-nitrogen bond in imidazolone-5-propanoate to yield N-formimidoyl-L-glutamate. It is the third step in the universal histidine degradation pathway. This is Imidazolonepropionase from Shewanella sp. (strain W3-18-1).